A 653-amino-acid polypeptide reads, in one-letter code: Fusexin 1 (653 aa).

The signal sequence occupies residues 1–23 (MKNGLKASVVALFFLLAASSASA). Residues 24–559 (ATNSVDTVTY…MEKALSGNAG (536 aa)) lie on the Extracellular side of the membrane. Cystine bridges form between Cys-126–Cys-166, Cys-397–Cys-440, Cys-467–Cys-490, and Cys-502–Cys-519. The segment at 154 to 159 (DTWTGQ) is fusion loop. Residues 560–580 (ALTWAQLLLSFIGFLAGFALV) traverse the membrane as a helical segment. Over 581–600 (GVKLGKMVDGLATEFIPLSD) the chain is Cytoplasmic. 2 helical membrane passes run 601–621 (AVVRLGIGLVGGGMAFMAVYQ) and 622–642 (LVTNPLGFLLTVVGLLLTGYL). The Cytoplasmic portion of the chain corresponds to 643–653 (YLKGTTPDINL).

Belongs to the HAP2/GCS1 family. Fusexin 1 subfamily. In terms of assembly, homotrimer stabilized by interdomain contacts and numerous Ca(2+) and Na(+) ions.

It is found in the cell surface. The protein resides in the cell membrane. Exhibits fusogenic activity. Mediates cell-cell fusion in mammalian cells (bilateral fusion). The sequence is that of Fusexin 1 from Haloferax sp. (strain Q22).